The primary structure comprises 348 residues: GTPase Obg (348 aa).

The Obg domain occupies 1-159 (MKFLDQARIY…MTLWLRLKLI (159 aa)). The OBG-type G domain occupies 160-327 (ADAGLVGLPN…TLQSLLAAID (168 aa)). GTP contacts are provided by residues 166 to 173 (GLPNAGKS), 191 to 195 (FTTLH), 212 to 215 (DIPG), 279 to 282 (SKID), and 308 to 310 (SAA). Mg(2+) is bound by residues S173 and T193.

This sequence belongs to the TRAFAC class OBG-HflX-like GTPase superfamily. OBG GTPase family. In terms of assembly, monomer. Mg(2+) serves as cofactor.

Its subcellular location is the cytoplasm. Functionally, an essential GTPase which binds GTP, GDP and possibly (p)ppGpp with moderate affinity, with high nucleotide exchange rates and a fairly low GTP hydrolysis rate. Plays a role in control of the cell cycle, stress response, ribosome biogenesis and in those bacteria that undergo differentiation, in morphogenesis control. In Beijerinckia indica subsp. indica (strain ATCC 9039 / DSM 1715 / NCIMB 8712), this protein is GTPase Obg.